The chain runs to 100 residues: Apolipoprotein C-II (100 aa).

A signal peptide spans 1 to 22; it reads MGSRFLLALFLVLLVLGYEVQG. The lipid binding stretch occupies residues 66-74; it reads SVDEKLRDM. Residues 78–100 form a lipoprotein lipase cofactor region; sequence SSAAVSTYAGIFTDQILTLLKGE.

Belongs to the apolipoprotein C2 family. In terms of processing, proapolipoprotein C-II is synthesized as a sialic acid containing glycoprotein which is subsequently desialylated prior to its proteolytic processing. Proapolipoprotein C-II, the major form found in plasma undergoes proteolytic cleavage of its N-terminal hexapeptide to generate the mature form apolipoprotein C-II, which occurs as the minor form in plasma.

It is found in the secreted. Functionally, component of chylomicrons, very low-density lipoproteins (VLDL), low-density lipoproteins (LDL), and high-density lipoproteins (HDL) in plasma. Plays an important role in lipoprotein metabolism as an activator of lipoprotein lipase. This chain is Apolipoprotein C-II (Apoc2), found in Neotoma lepida (Desert woodrat).